Here is a 284-residue protein sequence, read N- to C-terminus: D-tagatose-1,6-bisphosphate aldolase subunit GatY (284 aa).

Residue Asp-82 is the Proton donor of the active site. Zn(2+) is bound by residues His-83 and His-180. Gly-181 contacts dihydroxyacetone phosphate. A Zn(2+)-binding site is contributed by His-208. Residues 209–211 and 230–233 each bind dihydroxyacetone phosphate; these read GAS and NVAT.

This sequence belongs to the class II fructose-bisphosphate aldolase family. TagBP aldolase GatY subfamily. Forms a complex with GatZ. Zn(2+) serves as cofactor.

The catalysed reaction is D-tagatofuranose 1,6-bisphosphate = D-glyceraldehyde 3-phosphate + dihydroxyacetone phosphate. Its pathway is carbohydrate metabolism; D-tagatose 6-phosphate degradation; D-glyceraldehyde 3-phosphate and glycerone phosphate from D-tagatose 6-phosphate: step 2/2. Its function is as follows. Catalytic subunit of the tagatose-1,6-bisphosphate aldolase GatYZ, which catalyzes the reversible aldol condensation of dihydroxyacetone phosphate (DHAP or glycerone-phosphate) with glyceraldehyde 3-phosphate (G3P) to produce tagatose 1,6-bisphosphate (TBP). Requires GatZ subunit for full activity and stability. Is involved in the catabolism of galactitol. The protein is D-tagatose-1,6-bisphosphate aldolase subunit GatY of Escherichia coli (strain 55989 / EAEC).